The following is a 165-amino-acid chain: ATP synthase subunit b (165 aa).

The chain crosses the membrane as a helical span at residues 5–25; sequence LVGITWEFVFQIVNTFIIFLL.

Belongs to the ATPase B chain family. In terms of assembly, F-type ATPases have 2 components, F(1) - the catalytic core - and F(0) - the membrane proton channel. F(1) has five subunits: alpha(3), beta(3), gamma(1), delta(1), epsilon(1). F(0) has three main subunits: a(1), b(2) and c(10-14). The alpha and beta chains form an alternating ring which encloses part of the gamma chain. F(1) is attached to F(0) by a central stalk formed by the gamma and epsilon chains, while a peripheral stalk is formed by the delta and b chains.

It localises to the cell membrane. Its function is as follows. F(1)F(0) ATP synthase produces ATP from ADP in the presence of a proton or sodium gradient. F-type ATPases consist of two structural domains, F(1) containing the extramembraneous catalytic core and F(0) containing the membrane proton channel, linked together by a central stalk and a peripheral stalk. During catalysis, ATP synthesis in the catalytic domain of F(1) is coupled via a rotary mechanism of the central stalk subunits to proton translocation. Functionally, component of the F(0) channel, it forms part of the peripheral stalk, linking F(1) to F(0). The sequence is that of ATP synthase subunit b from Clostridioides difficile (strain 630) (Peptoclostridium difficile).